The sequence spans 638 residues: Neuroendocrine convertase 2 (638 aa).

The N-terminal stretch at 1 to 25 is a signal peptide; that stretch reads MKGGCVSQWKAAAGLLFCVTVFASA. The propeptide occupies 26 to 109; that stretch reads ERPVFTNHFL…QQEGFDRKKR (84 aa). The Peptidase S8 domain maps to 129–453; the sequence is QWYLINTGQA…YGVLDAGAMV (325 aa). Catalysis depends on charge relay system residues Asp-167 and His-208. 2 disulfide bridges follow: Cys-225/Cys-376 and Cys-317/Cys-347. An N-linked (GlcNAc...) asparagine glycan is attached at Asn-375. The active-site Charge relay system is Ser-384. In terms of domain architecture, P/Homo B spans 461 to 597; sequence TVPERFHCVG…TLMLHGSQSA (137 aa). The cysteines at positions 468 and 494 are disulfide-linked. 2 N-linked (GlcNAc...) asparagine glycosylation sites follow: Asn-514 and Asn-524.

The protein belongs to the peptidase S8 family. Furin subfamily.

The protein localises to the cytoplasmic vesicle. It localises to the secretory vesicle. It is found in the secreted. The catalysed reaction is Release of protein hormones and neuropeptides from their precursors, generally by hydrolysis of -Lys-Arg-|- bonds.. In terms of biological role, serine endopeptidase which is involved in the processing of hormone and other protein precursors at sites comprised of pairs of basic amino acid residues. Responsible for the release of glucagon from proglucagon in pancreatic A cells. This chain is Neuroendocrine convertase 2 (PCSK2), found in Sus scrofa (Pig).